Consider the following 83-residue polypeptide: Putative potassium channel toxin Ts20 (83 aa).

The first 18 residues, 1-18, serve as a signal peptide directing secretion; it reads MKLDIVLIMFVTFSTTLA.

Contains 3 disulfide bonds. As to expression, expressed by the venom gland.

It is found in the secreted. Its function is as follows. Reversibly inhibits potassium channels. In Tityus serrulatus (Brazilian scorpion), this protein is Putative potassium channel toxin Ts20.